Here is a 208-residue protein sequence, read N- to C-terminus: Peptidyl-tRNA hydrolase (208 aa).

Tyr-19 is a binding site for tRNA. The active-site Proton acceptor is the His-24. TRNA-binding residues include Phe-71, Asn-73, and Asn-119.

The protein belongs to the PTH family. As to quaternary structure, monomer.

The protein resides in the cytoplasm. The catalysed reaction is an N-acyl-L-alpha-aminoacyl-tRNA + H2O = an N-acyl-L-amino acid + a tRNA + H(+). Hydrolyzes ribosome-free peptidyl-tRNAs (with 1 or more amino acids incorporated), which drop off the ribosome during protein synthesis, or as a result of ribosome stalling. Its function is as follows. Catalyzes the release of premature peptidyl moieties from peptidyl-tRNA molecules trapped in stalled 50S ribosomal subunits, and thus maintains levels of free tRNAs and 50S ribosomes. The protein is Peptidyl-tRNA hydrolase of Synechococcus elongatus (strain ATCC 33912 / PCC 7942 / FACHB-805) (Anacystis nidulans R2).